Here is a 519-residue protein sequence, read N- to C-terminus: ATP synthase subunit beta, mitochondrial (519 aa).

Residues 1–21 (MLTRFRSAVLRGAVSITGARA) constitute a mitochondrion transit peptide. ATP contacts are provided by residues 184 to 191 (GAGVGKTV) and Arg-216.

Belongs to the ATPase alpha/beta chains family. In terms of assembly, F-type ATPases have 2 components, F(1) - the catalytic core - and F(o) - the membrane proton channel. F(1) has five subunits: alpha(3), beta(3), gamma(1), delta(1), epsilon(1), plus the additional subunit P18 (Tb427.05.1710) that is not present in F(1)F(o) ATP synthase from metazoa. Subunit P18 (Tb927.5.1710) interacts with the alpha subunit with a 1:1 stoichiometry; the interaction is direct. Subunit gamma is part of the central stalk. F(o) has three main subunits: a, b and c. The trypanosomal ATPase complex contains additional subunits that are not present in the F(1)F(o) ATP synthase from metazoa.

The protein localises to the mitochondrion. The protein resides in the mitochondrion inner membrane. It catalyses the reaction ATP + H2O + 4 H(+)(in) = ADP + phosphate + 5 H(+)(out). Its function is as follows. Mitochondrial membrane ATP synthase (F(1)F(o) ATP synthase) produces ATP from ADP in the presence of a proton gradient across the membrane which is generated by electron transport complexes of the respiratory chain. F-type ATPases consist of two structural domains, F(1) - containing the extramembraneous catalytic core, and F(o) - containing the membrane proton channel, linked together by a central stalk and a peripheral stalk. During catalysis, ATP synthesis in the catalytic domain of F(1) is coupled via a rotary mechanism of the central stalk subunits to proton translocation. Subunits alpha and beta form the catalytic core in F(1). Rotation of the central stalk against the surrounding alpha(3)beta(3) subunits leads to hydrolysis of ATP in three separate catalytic sites on the beta subunits. Contrary to the procyclic, insect form that requires F(1)F(o) ATP synthase for ATP synthesis, the bloodstream form relies on ATP hydrolysis by F(1)F(o) ATP synthase to maintain its mitochondrial membrane potential. The polypeptide is ATP synthase subunit beta, mitochondrial (Trypanosoma brucei brucei).